Reading from the N-terminus, the 693-residue chain is Exocyst complex component 7 (693 aa).

A Phosphoserine modification is found at Ser-236. The disordered stretch occupies residues 236–259 (SWGHEALRPRHSGRQTEPKKTTSA).

The protein belongs to the EXO70 family. The exocyst complex is composed of Sec3/Exoc1, Sec5/Exoc2, Sec6/Exoc3, Sec8/Exoc4, Sec10/Exoc5, Sec15/Exoc6, Exo70/Exoc7 and Exo84/Exoc8.

Required for exocytosis. Thought to function in intracellular vesicle targeting and docking before SNARE complex formation. This chain is Exocyst complex component 7, found in Drosophila melanogaster (Fruit fly).